A 307-amino-acid polypeptide reads, in one-letter code: Myeloid-associated differentiation marker-like protein 2 (307 aa).

MARVEL domains follow at residues 17–154 (AVTS…ARPG) and 159–303 (YMAT…RIRF). A run of 7 helical transmembrane segments spans residues 53-73 (FCMA…ACEF), 90-110 (AFAM…PLYF), 129-149 (LAAS…VALT), 163-183 (VSGL…GALV), 198-218 (VAVY…SVMG), 229-249 (RLVV…AVIW), and 278-298 (LVVA…LAYS).

The protein belongs to the MAL family.

Its subcellular location is the membrane. The polypeptide is Myeloid-associated differentiation marker-like protein 2 (MYADML2) (Homo sapiens (Human)).